A 270-amino-acid chain; its full sequence is Interleukin-1 alpha (270 aa).

A propeptide spanning residues 1–114 is cleaved from the precursor; sequence MAKVPDLFED…HDLEETIQPR (114 aa). Asn-46 carries N-linked (GlcNAc...) asparagine glycosylation. An N6-acetyllysine modification is found at Lys-85. The interval 85–89 is nuclear localization signal (NLS); that stretch reads KKRRL. Position 90 is a phosphoserine (Ser-90). A glycan (N-linked (GlcNAc...) asparagine) is linked at Asn-139.

This sequence belongs to the IL-1 family. As to quaternary structure, monomer. Interacts with TMED10; the interaction mediates the translocation from the cytoplasm into the ERGIC (endoplasmic reticulum-Golgi intermediate compartment) and thereby secretion. Interacts with IL1R1. Interacts with S100A13; this interaction is the first step in the export of IL1A, followed by direct translocation of this complex across the plasma membrane. In terms of processing, acetylated within its nuclear localization sequence, which impacts subcellular localization. Proteolytic processed by CAPN1 in a calcium-dependent manner. Cleavage from 31 kDa precursor to 18 kDa biologically active molecules. Post-translationally, phosphorylated. Phosphorylation greatly enhances susceptibility to digestion and promotes the conversion of pre-IL1A alpha to the biologically active IL1A.

It localises to the nucleus. Its subcellular location is the cytoplasm. It is found in the secreted. Its function is as follows. Cytokine constitutively present intracellularly in nearly all resting non-hematopoietic cells that plays an important role in inflammation and bridges the innate and adaptive immune systems. After binding to its receptor IL1R1 together with its accessory protein IL1RAP, forms the high affinity interleukin-1 receptor complex. Signaling involves the recruitment of adapter molecules such as MYD88, IRAK1 or IRAK4. In turn, mediates the activation of NF-kappa-B and the three MAPK pathways p38, p42/p44 and JNK pathways. Within the cell, acts as an alarmin and cell death results in its liberation in the extracellular space after disruption of the cell membrane to induce inflammation and alert the host to injury or damage. In addition to its role as a danger signal, which occurs when the cytokine is passively released by cell necrosis, directly senses DNA damage and acts as signal for genotoxic stress without loss of cell integrity. This chain is Interleukin-1 alpha, found in Rattus norvegicus (Rat).